The following is a 973-amino-acid chain: Protein HypA (973 aa).

This chain is Protein HypA (hypA), found in Clostridium perfringens (strain 13 / Type A).